Reading from the N-terminus, the 162-residue chain is Transcription elongation factor GreA (162 aa).

Positions 45-74 form a coiled coil; sequence ENAEYEAAREKQAFIEGRIKELEDMTARAE.

It belongs to the GreA/GreB family.

Functionally, necessary for efficient RNA polymerase transcription elongation past template-encoded arresting sites. The arresting sites in DNA have the property of trapping a certain fraction of elongating RNA polymerases that pass through, resulting in locked ternary complexes. Cleavage of the nascent transcript by cleavage factors such as GreA or GreB allows the resumption of elongation from the new 3'terminus. GreA releases sequences of 2 to 3 nucleotides. The polypeptide is Transcription elongation factor GreA (Rickettsia conorii (strain ATCC VR-613 / Malish 7)).